Here is a 461-residue protein sequence, read N- to C-terminus: Homocitrate synthase (461 aa).

The Pyruvate carboxyltransferase domain occupies 4–259 (VGILDSTLRE…IEVVKLDKLQ (256 aa)). Position 12 (arginine 12) interacts with 2-oxoglutarate. Glutamate 13 serves as a coordination point for Mg(2+). 2-oxoglutarate contacts are provided by histidine 76, arginine 136, and threonine 170. 2 residues coordinate Mg(2+): histidine 198 and histidine 200. The active-site Proton acceptor is the histidine 292.

This sequence belongs to the alpha-IPM synthase/homocitrate synthase family. Homocitrate synthase LYS20/LYS21 subfamily. The cofactor is Mg(2+). Mn(2+) is required as a cofactor.

The catalysed reaction is acetyl-CoA + 2-oxoglutarate + H2O = (2R)-homocitrate + CoA + H(+). It functions in the pathway amino-acid biosynthesis; L-lysine biosynthesis via AAA pathway; L-alpha-aminoadipate from 2-oxoglutarate: step 1/5. In terms of biological role, catalyzes the aldol-type condensation of 2-oxoglutarate with acetyl-CoA to yield homocitrate. Carries out the first step of the alpha-aminoadipate (AAA) lysine biosynthesis pathway. The protein is Homocitrate synthase of Saccharolobus islandicus (strain Y.N.15.51 / Yellowstone #2) (Sulfolobus islandicus).